A 563-amino-acid chain; its full sequence is MNNSSELIAAINGFRNSGRFCDINIVINDERINAHRLILSGASEYFSILFSSDFIDSNEYEVNLSHLDYQSVNDLIDYIYGIPLSLTNDSVKYILSTADFLQIGSAITECENYILKNLCSRNCIDFYIYADKYNNKKIETASFNTILRNILRLINDENFKYLTEESMIKILSDDMLNIKNEDFAPLILIKWLESTQQPCTVELLRCLRISLLSPQVIKSLYSHRLVSSIYECITFLNNIAFLDESFPRYNSIELISIGISNSRDKISINCYNRKKNTWEMISSRGYRCSFAVAVMDNIIYMMGGYDQSPYRSSKVIAYNTCTNSWIYDIPELKYPRSNCGGVVDDEYIYCIGGIRDQDSSLISDIDRWKPSKPYWQTYAKMREPKCDMGVAMLNGLIYVIGGVVKGGTCTDTLESLSEDGWMMHRRLPIKMSNMSTIVHAGKIYISGGYTNSSIVNEISNLVLSYNPIYDEWTKLSSLNIPRINPALWSVHNKLYVGGISDDVQTNTSETYDKEKDCWTLDNGHVLPYNYIMYKCEPIKHKYPLEKIQYTNDFLKCLESFIGS.

The 68-residue stretch at Cys21–Asn88 folds into the BTB domain. The BACK domain occupies Cys123 to Ser219. Kelch repeat units lie at residues Ile252 to Asn297, Ile298 to Glu346, Tyr347 to Gly395, Ile397 to Gly441, Lys442 to Asn492, and Leu494 to His540.

In terms of assembly, interacts (via BTB domain) with host CUL3.

It localises to the host cytoplasm. Its function is as follows. Probable substrate-specific adapter of CUL3-containing E3 ubiquitin-protein ligases which mediate the ubiquitination and subsequent proteasomal degradation of host target proteins. This chain is Kelch repeat and BTB domain-containing protein 1 (KBTB1), found in Mus musculus (Mouse).